The primary structure comprises 480 residues: NADH-quinone oxidoreductase subunit N (480 aa).

The next 14 membrane-spanning stretches (helical) occupy residues 12 to 32 (LLIP…LGVF), 41 to 61 (LVQW…LFLV), 80 to 100 (FSKT…MPYL), 105 to 125 (LGKI…MMMV), 130 to 150 (LIAM…LAAF), 165 to 185 (FVLG…VYGF), 204 to 224 (IGLT…VSAA), 237 to 257 (APTP…IVLL), 275 to 295 (VIWM…LTQQ), 300 to 320 (LMAY…AAAS), 326 to 346 (ALLV…ATIL), 372 to 392 (GWSM…VGFF), 406 to 428 (LMIL…LRIV), and 450 to 470 (IARI…WLVF).

This sequence belongs to the complex I subunit 2 family. As to quaternary structure, NDH-1 is composed of 14 different subunits. Subunits NuoA, H, J, K, L, M, N constitute the membrane sector of the complex.

It is found in the cell inner membrane. It catalyses the reaction a quinone + NADH + 5 H(+)(in) = a quinol + NAD(+) + 4 H(+)(out). Functionally, NDH-1 shuttles electrons from NADH, via FMN and iron-sulfur (Fe-S) centers, to quinones in the respiratory chain. The immediate electron acceptor for the enzyme in this species is believed to be ubiquinone. Couples the redox reaction to proton translocation (for every two electrons transferred, four hydrogen ions are translocated across the cytoplasmic membrane), and thus conserves the redox energy in a proton gradient. This is NADH-quinone oxidoreductase subunit N from Maricaulis maris (strain MCS10) (Caulobacter maris).